We begin with the raw amino-acid sequence, 1391 residues long: DNA-directed RNA polymerase subunit beta' (1391 aa).

4 residues coordinate Zn(2+): cysteine 72, cysteine 74, cysteine 87, and cysteine 90. Aspartate 462, aspartate 464, and aspartate 466 together coordinate Mg(2+). Zn(2+) contacts are provided by cysteine 816, cysteine 890, cysteine 897, and cysteine 900.

It belongs to the RNA polymerase beta' chain family. The RNAP catalytic core consists of 2 alpha, 1 beta, 1 beta' and 1 omega subunit. When a sigma factor is associated with the core the holoenzyme is formed, which can initiate transcription. Mg(2+) serves as cofactor. Zn(2+) is required as a cofactor.

It catalyses the reaction RNA(n) + a ribonucleoside 5'-triphosphate = RNA(n+1) + diphosphate. Its function is as follows. DNA-dependent RNA polymerase catalyzes the transcription of DNA into RNA using the four ribonucleoside triphosphates as substrates. This is DNA-directed RNA polymerase subunit beta' from Neisseria meningitidis serogroup A / serotype 4A (strain DSM 15465 / Z2491).